The chain runs to 55 residues: Ribosome modulation factor (55 aa).

The protein belongs to the ribosome modulation factor family. In terms of assembly, associates exclusively with 100S ribosomes.

It is found in the cytoplasm. Functionally, during stationary phase, converts 70S ribosomes to an inactive dimeric form (100S ribosomes). May form immature 90S particles, which are converted to mature 100S ribosomes by the hibernation promoting factor Hpf. The chain is Ribosome modulation factor from Escherichia coli O157:H7.